The sequence spans 212 residues: Probable transaldolase (212 aa).

Lysine 83 (schiff-base intermediate with substrate) is an active-site residue.

Belongs to the transaldolase family. Type 3B subfamily.

The protein localises to the cytoplasm. It catalyses the reaction D-sedoheptulose 7-phosphate + D-glyceraldehyde 3-phosphate = D-erythrose 4-phosphate + beta-D-fructose 6-phosphate. Its pathway is carbohydrate degradation; pentose phosphate pathway; D-glyceraldehyde 3-phosphate and beta-D-fructose 6-phosphate from D-ribose 5-phosphate and D-xylulose 5-phosphate (non-oxidative stage): step 2/3. In terms of biological role, transaldolase is important for the balance of metabolites in the pentose-phosphate pathway. This chain is Probable transaldolase (tal), found in Halalkalibacterium halodurans (strain ATCC BAA-125 / DSM 18197 / FERM 7344 / JCM 9153 / C-125) (Bacillus halodurans).